Consider the following 1254-residue polypeptide: Histone-lysine N-methyltransferase eggless (1254 aa).

Disordered stretches follow at residues 24–209 (ALVE…EIPR) and 228–248 (PVPR…SKTT). 2 stretches are compositionally biased toward basic and acidic residues: residues 40–57 (TPEK…KDLT) and 65–81 (KSQE…KDPE). A compositionally biased stretch (low complexity) spans 112–125 (SVELLESPLKSPSS). Basic and acidic residues predominate over residues 136–162 (LEEKEKPGPAKELEPKESEPDSKESSK). A compositionally biased stretch (polar residues) spans 172–181 (ELISSPTSDD). Basic and acidic residues-rich tracts occupy residues 182-197 (SLAK…EHGQ) and 234-243 (AMQESKETQK). Residues 391-416 (TILQAKIERLAKKFEEVDLQLAQVQG) adopt a coiled-coil conformation. Tudor domains are found at residues 535-607 (RLPI…SEKV) and 634-691 (QCTK…KETQ). Residues 734–760 (ARKSTSKSGSPASTAAPPTGSSSSSAV) are disordered. The span at 739-759 (SKSGSPASTAAPPTGSSSSSA) shows a compositional bias: low complexity. The MBD domain occupies 811-877 (LDSYSPLSKP…DNFDFTPDLR (67 aa)). A Pre-SET domain is found at 939-1011 (VCCDCEDDCS…NCLNRVVQHS (73 aa)). The Zn(2+) site is built by Cys941, Cys943, Cys947, Cys953, Cys955, Cys993, Cys997, Cys999, and Cys1003. In terms of domain architecture, SET spans 1014-1229 (MKLQVFKTSN…SGTELTWNYN (216 aa)). Residues 1024–1026 (RGW), Asp1062, and Tyr1064 each bind S-adenosyl-L-methionine. A compositionally biased stretch (basic and acidic residues) spans 1081 to 1090 (YESDVERADL). Residues 1081–1139 (YESDVERADLDHEDDNYGPDAEDDDDFRPNNYYQKKKEKLRSSRSNSSSTQNTELDSQE) form a disordered region. Residues 1091–1106 (DHEDDNYGPDAEDDDD) show a composition bias toward acidic residues. Positions 1123 to 1134 (SRSNSSSTQNTE) are enriched in low complexity. S-adenosyl-L-methionine is bound by residues Arg1183 and 1186–1187 (NH). Positions 1189, 1242, 1244, and 1249 each coordinate Zn(2+). A Post-SET domain is found at 1238–1254 (KVLYCQCGAQNCRVRLL).

It belongs to the class V-like SAM-binding methyltransferase superfamily. Histone-lysine methyltransferase family. Suvar3-9 subfamily.

It localises to the nucleus. The protein resides in the chromosome. It catalyses the reaction L-lysyl(9)-[histone H3] + 3 S-adenosyl-L-methionine = N(6),N(6),N(6)-trimethyl-L-lysyl(9)-[histone H3] + 3 S-adenosyl-L-homocysteine + 3 H(+). Functionally, histone methyltransferase that specifically trimethylates 'Lys-9' of histone H3 in ovary. H3 'Lys-9' trimethylation represents a specific tag for epigenetic transcriptional repression by recruiting Su(var)205/HP1 to methylated histones. Plays a central role during oogenesis. This Drosophila pseudoobscura pseudoobscura (Fruit fly) protein is Histone-lysine N-methyltransferase eggless (egg).